We begin with the raw amino-acid sequence, 528 residues long: CTD kinase subunit alpha (528 aa).

Positions 1–15 are enriched in polar residues; it reads MSYNNGNTYSKSYSR. The disordered stretch occupies residues 1–148; the sequence is MSYNNGNTYS…NTSNDIKNGY (148 aa). Ser-14 is modified (phosphoserine; by autocatalysis). Residues 37–44 carry the Nuclear localization signal motif; the sequence is PPKRIRTD. Polar residues predominate over residues 45 to 103; that stretch reads SGYQSNMDNISSHRVNSNDQPGHTKSRGNNNLSRYNDTSFQTSSRYQGSRYNNNNTSYE. A compositionally biased stretch (basic and acidic residues) spans 104 to 118; it reads NRPKSIKRDETKAEF. The span at 134–144 shows a compositional bias: polar residues; it reads YNNSSNTSNDI. Residues 183–469 form the Protein kinase domain; that stretch reads YLRIMQVGEG…ATEALQSDYF (287 aa). Residues 189-197 and Lys-212 each bind ATP; that span reads VGEGTYGKV. Asp-306 serves as the catalytic Proton acceptor. Phosphothreonine is present on Thr-338. The disordered stretch occupies residues 497–528; that stretch reads QKRPNILSTNTNNKGNGNSNNNNNNNNDDDDK. The span at 504-522 shows a compositional bias: low complexity; sequence STNTNNKGNGNSNNNNNNN.

Belongs to the protein kinase superfamily. CMGC Ser/Thr protein kinase family. CDC2/CDKX subfamily. In terms of assembly, CTDK-I consists of three subunits, CTK1, CTK2 and CTK3 (also called alpha, beta and gamma). Interacts directly with the CTK2 and CTK3 subunits, this interaction is required for kinase activity. Interacts with RNA polymerase I. Interacts with SNF1, but only at low glucose concentrations. Interacts with translating ribosomes. Phosphorylated on Thr-338 by CAK1. Phosphorylation is essential for the elevated CTD Ser-2 phosphorylation and required to activate transcription of stationary-phase genes during the diauxic shift.

Its subcellular location is the nucleus. It is found in the nucleolus. It localises to the cytoplasm. The enzyme catalyses [DNA-directed RNA polymerase] + ATP = phospho-[DNA-directed RNA polymerase] + ADP + H(+). Catalytic subunit of the CTDK-I complex, which hyperphosphorylates the C-terminal heptapeptide repeat domain (CTD) of the largest RNA polymerase II subunit. CTDK-I phosphorylates 'Ser-5' if the CTD substrate is not phosphorylated at 'Ser-5', but will phosphorylate 'Ser-2' of a CTD substrate if 'Ser-5' is already phosphorylated. CTDK-I is also more reactive toward substrates that are prephosphorylated at 'Ser-2' or 'Ser-5' compared with an unphosphorylated CTD substrate, therefore efficiently creating doubly phosphorylated CTD repeats. Involved in RNA polymerase II transcriptional elongation, and through PTI1, pre-mRNA 3'-end processing. Participates in both positive and negative regulation of CTD phosphorylation. Required for DNA damage induced transcription, including the expression of the RNR genes, and reprogramming of gene expression upon amino acid starvation. Required for SET2 mediated H3K36 methylation. Also regulates H3K4 methylation. Controls the maintenance of suppressive chromatin in the coding regions of genes by both promoting H3K36 methylation, which leads to histone deacetylation, and catalyzing phosphorylation of the CTD required to localize H3K4 chromatin modification specifically to the 5' ends of genes, thereby creating a boundary for H3K4 methylation that prevents a mark associated with transcriptional initiation from spreading into the bodies of genes. Involved in RNA polymerase I transcription. Involved in telomere maintenance. Acts together with SNF1 to induce GSY2 transcription in response to glucose limitation. Involved in the adaptation to alternative carbon sources, including galactose, glycerol and ethanol, but not raffinose. Required for the integrity of the rDNA locus. Functions in translation elongation by enhancing decoding fidelity. Needed for translational accuracy by phosphorylating RPS2. This is CTD kinase subunit alpha (CTK1) from Saccharomyces cerevisiae (strain ATCC 204508 / S288c) (Baker's yeast).